The following is a 167-amino-acid chain: uncharacterized protein (167 aa).

Positions methionine 1 to proline 13 are enriched in basic and acidic residues. 2 disordered regions span residues methionine 1 to arginine 26 and glutamate 67 to asparagine 167. The segment covering serine 71 to histidine 80 has biased composition (low complexity). A compositionally biased stretch (basic and acidic residues) spans valine 102–lysine 156.

This is an uncharacterized protein from Saccharomyces cerevisiae (strain ATCC 204508 / S288c) (Baker's yeast).